A 326-amino-acid chain; its full sequence is Protein GVP36 (326 aa).

S2 carries the post-translational modification N-acetylserine. Position 2 is a phosphoserine (S2). Glycyl lysine isopeptide (Lys-Gly) (interchain with G-Cter in ubiquitin) cross-links involve residues K13, K305, and K313. Residues 299 to 326 (AEEPEAKPEVAEEEKPQTAISMNDEDDA) form a disordered region. The span at 302–314 (PEAKPEVAEEEKP) shows a compositional bias: basic and acidic residues. Position 319 is a phosphoserine (S319).

The protein localises to the golgi apparatus membrane. The sequence is that of Protein GVP36 (GVP36) from Saccharomyces cerevisiae (strain ATCC 204508 / S288c) (Baker's yeast).